Consider the following 263-residue polypeptide: Genetic interactor of prohibitin 7, mitochondrial (263 aa).

The N-terminal 26 residues, 1–26, are a transit peptide targeting the mitochondrion; the sequence is MSLAMLTRNMLRRTSVRAFASSASNF. A helical transmembrane segment spans residues 188 to 204; the sequence is VTKTFIYITLFVMLFAI. The tract at residues 232-252 is disordered; sequence KEQKEKEKEIEEENRKNQEKQ.

Belongs to the GEP7 family.

Its subcellular location is the mitochondrion membrane. In terms of biological role, involved in respiratory growth and required for cell survival in the absence of prohibitins. This chain is Genetic interactor of prohibitin 7, mitochondrial (GEP7), found in Clavispora lusitaniae (strain ATCC 42720) (Yeast).